We begin with the raw amino-acid sequence, 61 residues long: Beta-insect depressant toxin BaIT2 (61 aa).

Positions 1–61 constitute an LCN-type CS-alpha/beta domain; it reads DGYIRRRDGC…TWKSETNTCG (61 aa). 4 disulfide bridges follow: Cys-10–Cys-60, Cys-14–Cys-35, Cys-21–Cys-42, and Cys-25–Cys-44.

The protein belongs to the long (4 C-C) scorpion toxin superfamily. Sodium channel inhibitor family. Beta subfamily. Expressed by the venom gland.

It localises to the secreted. In terms of biological role, depressant insect beta-toxins cause a transient contraction paralysis followed by a slow flaccid paralysis. They bind voltage-independently at site-4 of sodium channels (Nav) and shift the voltage of activation toward more negative potentials thereby affecting sodium channel activation and promoting spontaneous and repetitive firing. This toxin is active only on insects. This Buthacus arenicola (North African scorpion) protein is Beta-insect depressant toxin BaIT2.